Here is a 151-residue protein sequence, read N- to C-terminus: Small ribosomal subunit protein eS6 (151 aa).

The protein belongs to the eukaryotic ribosomal protein eS6 family.

This Pyrobaculum calidifontis (strain DSM 21063 / JCM 11548 / VA1) protein is Small ribosomal subunit protein eS6.